The following is a 482-amino-acid chain: Kynurenine 3-monooxygenase (482 aa).

This sequence belongs to the aromatic-ring hydroxylase family. KMO subfamily. Requires FAD as cofactor.

The protein localises to the mitochondrion outer membrane. It carries out the reaction L-kynurenine + NADPH + O2 + H(+) = 3-hydroxy-L-kynurenine + NADP(+) + H2O. Its pathway is cofactor biosynthesis; NAD(+) biosynthesis; quinolinate from L-kynurenine: step 1/3. Catalyzes the hydroxylation of L-kynurenine (L-Kyn) to form 3-hydroxy-L-kynurenine (L-3OHKyn). Required for synthesis of quinolinic acid. The sequence is that of Kynurenine 3-monooxygenase from Phaeosphaeria nodorum (strain SN15 / ATCC MYA-4574 / FGSC 10173) (Glume blotch fungus).